The following is a 504-amino-acid chain: Anaerobic nitric oxide reductase transcription regulator NorR (504 aa).

Position 57 is a 4-aspartylphosphate (Asp57). The Sigma-54 factor interaction domain occupies 187–416 (MIGLSPGMTQ…LEHAIHRAVV (230 aa)). Residues 215–222 (GETGTGKE) and 278–287 (ADNGTLFLDE) each bind ATP. The segment at residues 479–498 (WAACARMLETDVANLHRLAK) is a DNA-binding region (H-T-H motif).

It participates in nitrogen metabolism; nitric oxide reduction. Its function is as follows. Required for the expression of anaerobic nitric oxide (NO) reductase, acts as a transcriptional activator for at least the norVW operon. Activation also requires sigma-54. The chain is Anaerobic nitric oxide reductase transcription regulator NorR from Shigella dysenteriae serotype 1 (strain Sd197).